A 363-amino-acid chain; its full sequence is Fructose-bisphosphate aldolase C (363 aa).

Arg-56 and Lys-147 together coordinate substrate. Residue Lys-230 is the Schiff-base intermediate with dihydroxyacetone-P of the active site.

This sequence belongs to the class I fructose-bisphosphate aldolase family. As to quaternary structure, homotetramer. As to expression, expressed in brain but not in liver or muscle.

It carries out the reaction beta-D-fructose 1,6-bisphosphate = D-glyceraldehyde 3-phosphate + dihydroxyacetone phosphate. It participates in carbohydrate degradation; glycolysis; D-glyceraldehyde 3-phosphate and glycerone phosphate from D-glucose: step 4/4. The chain is Fructose-bisphosphate aldolase C (aldoc) from Carassius auratus (Goldfish).